A 66-amino-acid chain; its full sequence is EACEELRFGGQAQVPTLVDSVYQQFLAPGAARWINIDSRTMEWTLEGLRQPHRYVLDAAQLHIYML.

The RGS domain occupies 1–66; that stretch reads EACEELRFGG…DAAQLHIYML (66 aa).

In terms of assembly, heterodimer with Gbeta5. Interacts with RGS7BP, leading to regulate the subcellular location of the heterodimer formed with Gbeta5.

In terms of biological role, inhibits signal transduction by increasing the GTPase activity of G protein alpha subunits thereby driving them into their inactive GDP-bound form. This Rattus norvegicus (Rat) protein is Regulator of G-protein signaling 11 (Rgs11).